Reading from the N-terminus, the 440-residue chain is Putative postmeiotic segregation increased 2-like protein 1 (440 aa).

Residues 164–178 (RVEHNVESSRWEPRR) show a composition bias toward basic and acidic residues. The segment at 164–215 (RVEHNVESSRWEPRRRGACGSRGGNFPSPRGGSGVASLERAESSSTEPAKAI) is disordered. A Histidine kinase domain is found at 230–364 (PVVPSLSTAV…MTVSVKQLFS (135 aa)).

This sequence belongs to the DNA mismatch repair MutL/HexB family. As to expression, highly expressed in kidney, spleen, adrenal gland, ovary and cerebellum and to a lower extent in liver, esophagus, stomach, duodenum, colon, bladder, uterus, lung, pancreas and cerebrum. Not expressed in heart.

The polypeptide is Putative postmeiotic segregation increased 2-like protein 1 (PMS2P1) (Homo sapiens (Human)).